The chain runs to 100 residues: Co-chaperonin GroES (100 aa).

The protein belongs to the GroES chaperonin family. Heptamer of 7 subunits arranged in a ring. Interacts with the chaperonin GroEL.

It is found in the cytoplasm. Its function is as follows. Together with the chaperonin GroEL, plays an essential role in assisting protein folding. The GroEL-GroES system forms a nano-cage that allows encapsulation of the non-native substrate proteins and provides a physical environment optimized to promote and accelerate protein folding. GroES binds to the apical surface of the GroEL ring, thereby capping the opening of the GroEL channel. This is Co-chaperonin GroES from Rhodothermus marinus (Rhodothermus obamensis).